We begin with the raw amino-acid sequence, 493 residues long: MNVRVRFAPSPTGFVHIGSLRTALYNYLFAKKMGGEYILRVEDTDQSRLVEGAIENMLNAMKWAGVNHSEGVILDDSGKVVQKGEYGPYIQSQRLDIYQEYIKQLLDSGKAYYCFCTKERLDEVRDAQRAAGETAKYDGHCKNLSKEEVEANIKAGIPYVIRLRLPENHTIKFTDLVRGDMEFNTNDLDDQVLMKTDGFPTYHFAVVVDDYLMKITHVIRGEEWVSSTPKHVYLYEAFGWEAPVFVHLPNILNKEKKKLSKRQGDVAVEDFKKKGYLPEGLVNYVALVGWSPEDNQELFTMEELEKAFSVERVSKSGGVFDTEKLNWVNQHYIKDGDDAYLTDLAIPFLIEDGFITEEEATNKYDFLKSMISVLKEKLQYVKEVTEHASIFFGDKIEVETEEGREFLRLEHIPTLIDALREKIEKTEVLNAEFVQAMLKEIQKEYKIKGKNLFMGSRIILTGQMHGPDLPKVMEVLGKETCLNRIAYVKNNIL.

The 'HIGH' region signature appears at 9–19 (PSPTGFVHIGS). The short motif at 258 to 262 (KLSKR) is the 'KMSKS' region element. Lysine 261 is an ATP binding site.

Belongs to the class-I aminoacyl-tRNA synthetase family. Glutamate--tRNA ligase type 1 subfamily. As to quaternary structure, monomer.

The protein localises to the cytoplasm. It carries out the reaction tRNA(Glu) + L-glutamate + ATP = L-glutamyl-tRNA(Glu) + AMP + diphosphate. Its function is as follows. Catalyzes the attachment of glutamate to tRNA(Glu) in a two-step reaction: glutamate is first activated by ATP to form Glu-AMP and then transferred to the acceptor end of tRNA(Glu). The protein is Glutamate--tRNA ligase of Clostridioides difficile (strain 630) (Peptoclostridium difficile).